Here is a 158-residue protein sequence, read N- to C-terminus: 2-C-methyl-D-erythritol 2,4-cyclodiphosphate synthase (158 aa).

Asp8 and His10 together coordinate a divalent metal cation. Residues 8-10 (DVH) and 34-35 (HS) each bind 4-CDP-2-C-methyl-D-erythritol 2-phosphate. His42 contributes to the a divalent metal cation binding site. 4-CDP-2-C-methyl-D-erythritol 2-phosphate contacts are provided by residues 56 to 58 (DIG), 61 to 65 (FPDTD), 100 to 106 (AQRPKMA), 132 to 135 (TTEE), Phe139, and Arg142.

This sequence belongs to the IspF family. In terms of assembly, homotrimer. Requires a divalent metal cation as cofactor.

It catalyses the reaction 4-CDP-2-C-methyl-D-erythritol 2-phosphate = 2-C-methyl-D-erythritol 2,4-cyclic diphosphate + CMP. Its pathway is isoprenoid biosynthesis; isopentenyl diphosphate biosynthesis via DXP pathway; isopentenyl diphosphate from 1-deoxy-D-xylulose 5-phosphate: step 4/6. Involved in the biosynthesis of isopentenyl diphosphate (IPP) and dimethylallyl diphosphate (DMAPP), two major building blocks of isoprenoid compounds. Catalyzes the conversion of 4-diphosphocytidyl-2-C-methyl-D-erythritol 2-phosphate (CDP-ME2P) to 2-C-methyl-D-erythritol 2,4-cyclodiphosphate (ME-CPP) with a corresponding release of cytidine 5-monophosphate (CMP). In Pelobacter propionicus (strain DSM 2379 / NBRC 103807 / OttBd1), this protein is 2-C-methyl-D-erythritol 2,4-cyclodiphosphate synthase.